Here is a 272-residue protein sequence, read N- to C-terminus: Insertion element IS600 uncharacterized 31 kDa protein (272 aa).

The 164-residue stretch at 105-268 folds into the Integrase catalytic domain; it reads APTAPNQVWV…SPAAFREKYH (164 aa).

This Shigella sonnei protein is Insertion element IS600 uncharacterized 31 kDa protein.